The following is a 209-amino-acid chain: Ribosomal RNA large subunit methyltransferase E (209 aa).

S-adenosyl-L-methionine is bound by residues G63, W65, D83, D99, and D124. K164 functions as the Proton acceptor in the catalytic mechanism.

It belongs to the class I-like SAM-binding methyltransferase superfamily. RNA methyltransferase RlmE family.

The protein resides in the cytoplasm. The enzyme catalyses uridine(2552) in 23S rRNA + S-adenosyl-L-methionine = 2'-O-methyluridine(2552) in 23S rRNA + S-adenosyl-L-homocysteine + H(+). Functionally, specifically methylates the uridine in position 2552 of 23S rRNA at the 2'-O position of the ribose in the fully assembled 50S ribosomal subunit. In Vibrio vulnificus (strain CMCP6), this protein is Ribosomal RNA large subunit methyltransferase E.